A 322-amino-acid polypeptide reads, in one-letter code: Ferredoxin--NADP reductase (322 aa).

FAD is bound by residues S14, D33, Q41, Y46, A86, F120, D278, and S319.

It belongs to the ferredoxin--NADP reductase type 2 family. In terms of assembly, homodimer. Requires FAD as cofactor.

The catalysed reaction is 2 reduced [2Fe-2S]-[ferredoxin] + NADP(+) + H(+) = 2 oxidized [2Fe-2S]-[ferredoxin] + NADPH. The polypeptide is Ferredoxin--NADP reductase (Salinispora arenicola (strain CNS-205)).